The primary structure comprises 111 residues: MTTAFMTTDEVAQLRASDCMSCAGVDCTVADSGPVLEEFYQTTPRYNYQGGVTGKFWAKVHEVVDILNSSNEWPFEPLEVSRDRKTLWDGHHRSNAAILAGCDKPIPVEEW.

This is Gene 81 protein (81) from Mycobacterium (Mycobacteriophage L5).